Consider the following 126-residue polypeptide: Small ribosomal subunit protein uS13c (126 aa).

Residues 95-126 (GLPLRGQNTRTNARTKRGIKKTMAGKKKAPRK) form a disordered region. Basic residues predominate over residues 107–126 (ARTKRGIKKTMAGKKKAPRK).

Belongs to the universal ribosomal protein uS13 family. Part of the 30S ribosomal subunit.

The protein resides in the plastid. It localises to the chloroplast. Functionally, located at the top of the head of the 30S subunit, it contacts several helices of the 16S rRNA. This chain is Small ribosomal subunit protein uS13c, found in Gracilaria tenuistipitata var. liui (Red alga).